The sequence spans 237 residues: 1-(5-phosphoribosyl)-5-[(5-phosphoribosylamino)methylideneamino] imidazole-4-carboxamide isomerase (237 aa).

The Proton acceptor role is filled by D8. Catalysis depends on D129, which acts as the Proton donor.

This sequence belongs to the HisA/HisF family.

The protein localises to the cytoplasm. The catalysed reaction is 1-(5-phospho-beta-D-ribosyl)-5-[(5-phospho-beta-D-ribosylamino)methylideneamino]imidazole-4-carboxamide = 5-[(5-phospho-1-deoxy-D-ribulos-1-ylimino)methylamino]-1-(5-phospho-beta-D-ribosyl)imidazole-4-carboxamide. It functions in the pathway amino-acid biosynthesis; L-histidine biosynthesis; L-histidine from 5-phospho-alpha-D-ribose 1-diphosphate: step 4/9. This is 1-(5-phosphoribosyl)-5-[(5-phosphoribosylamino)methylideneamino] imidazole-4-carboxamide isomerase from Alkaliphilus metalliredigens (strain QYMF).